Reading from the N-terminus, the 404-residue chain is MDYSEIMVRHGELSTKGKNRMRFINKLKNNIQDVLAPFPAITVRSDRDRTHVYLNGTDYQPVVEALKLVFGVQALSPVYKLEKSVPLLVTAVQDIMTSLYRDGLTFKIATKRSDHAFELDSRELNSLLGGAVFEVLPNIQAQMKHPDVTLKVEIRDEAAYISYEEIKGAGGLPVGTSGKGMLMLSGGIDSPVAGYLALKRGLDIEVVHFASPPYTSPGALAKAQDLTRRLTRFGGNIQFIEVPFTEIQEEIKNKAPEAYLMTLTRRFMMRITDAIREQRKGLVIVNGESLGQVASQTLESMQAINAVTSTPIIRPVVTMDKLEIIEMAQAIDTFDISIQPFEDCCTIFAPDRPKTNPKLGNAEKYEERFDIDGLVQRAVSGIVVTEITPEIVNDEVENLIDALL.

Residues 60-165 form the THUMP domain; that stretch reads QPVVEALKLV…DEAAYISYEE (106 aa). ATP contacts are provided by residues 183–184, 208–209, R265, G287, and Q296; these read ML and HF.

The protein belongs to the ThiI family.

The protein localises to the cytoplasm. The enzyme catalyses [ThiI sulfur-carrier protein]-S-sulfanyl-L-cysteine + a uridine in tRNA + 2 reduced [2Fe-2S]-[ferredoxin] + ATP + H(+) = [ThiI sulfur-carrier protein]-L-cysteine + a 4-thiouridine in tRNA + 2 oxidized [2Fe-2S]-[ferredoxin] + AMP + diphosphate. It catalyses the reaction [ThiS sulfur-carrier protein]-C-terminal Gly-Gly-AMP + S-sulfanyl-L-cysteinyl-[cysteine desulfurase] + AH2 = [ThiS sulfur-carrier protein]-C-terminal-Gly-aminoethanethioate + L-cysteinyl-[cysteine desulfurase] + A + AMP + 2 H(+). Its pathway is cofactor biosynthesis; thiamine diphosphate biosynthesis. Catalyzes the ATP-dependent transfer of a sulfur to tRNA to produce 4-thiouridine in position 8 of tRNAs, which functions as a near-UV photosensor. Also catalyzes the transfer of sulfur to the sulfur carrier protein ThiS, forming ThiS-thiocarboxylate. This is a step in the synthesis of thiazole, in the thiamine biosynthesis pathway. The sulfur is donated as persulfide by IscS. The polypeptide is Probable tRNA sulfurtransferase (Streptococcus pyogenes serotype M6 (strain ATCC BAA-946 / MGAS10394)).